A 545-amino-acid polypeptide reads, in one-letter code: CTP synthase (545 aa).

The tract at residues methionine 1–leucine 266 is amidoligase domain. Serine 14 contacts CTP. Serine 14 provides a ligand contact to UTP. ATP is bound by residues serine 15–isoleucine 20 and aspartate 72. Residues aspartate 72 and glutamate 140 each contribute to the Mg(2+) site. Residues aspartate 147–glutamate 149, lysine 187–glutamine 192, and lysine 223 contribute to the CTP site. Residues lysine 187–glutamine 192 and lysine 223 each bind UTP. ATP is bound at residue lysine 239 to valine 241. The region spanning threonine 291 to arginine 542 is the Glutamine amidotransferase type-1 domain. L-glutamine is bound at residue glycine 352. Cysteine 379 acts as the Nucleophile; for glutamine hydrolysis in catalysis. Residues leucine 380–glutamine 383, glutamate 403, and arginine 470 contribute to the L-glutamine site. Residues histidine 515 and glutamate 517 contribute to the active site.

It belongs to the CTP synthase family. Homotetramer.

It carries out the reaction UTP + L-glutamine + ATP + H2O = CTP + L-glutamate + ADP + phosphate + 2 H(+). It catalyses the reaction L-glutamine + H2O = L-glutamate + NH4(+). The catalysed reaction is UTP + NH4(+) + ATP = CTP + ADP + phosphate + 2 H(+). It functions in the pathway pyrimidine metabolism; CTP biosynthesis via de novo pathway; CTP from UDP: step 2/2. Its activity is regulated as follows. Allosterically activated by GTP, when glutamine is the substrate; GTP has no effect on the reaction when ammonia is the substrate. The allosteric effector GTP functions by stabilizing the protein conformation that binds the tetrahedral intermediate(s) formed during glutamine hydrolysis. Inhibited by the product CTP, via allosteric rather than competitive inhibition. In terms of biological role, catalyzes the ATP-dependent amination of UTP to CTP with either L-glutamine or ammonia as the source of nitrogen. Regulates intracellular CTP levels through interactions with the four ribonucleotide triphosphates. In Salmonella paratyphi A (strain ATCC 9150 / SARB42), this protein is CTP synthase.